Consider the following 409-residue polypeptide: 1-deoxy-D-xylulose 5-phosphate reductoisomerase (409 aa).

Threonine 5, glycine 6, serine 7, isoleucine 8, glycine 31, asparagine 33, and asparagine 122 together coordinate NADPH. Lysine 123 provides a ligand contact to 1-deoxy-D-xylulose 5-phosphate. Glutamate 124 serves as a coordination point for NADPH. Aspartate 148 is a binding site for Mn(2+). Residues serine 149, glutamate 150, serine 186, and histidine 209 each contribute to the 1-deoxy-D-xylulose 5-phosphate site. Glutamate 150 contributes to the Mn(2+) binding site. Residue glycine 215 participates in NADPH binding. The 1-deoxy-D-xylulose 5-phosphate site is built by serine 222, asparagine 227, lysine 228, and glutamate 231. A Mn(2+)-binding site is contributed by glutamate 231.

This sequence belongs to the DXR family. Mg(2+) is required as a cofactor. Mn(2+) serves as cofactor.

It catalyses the reaction 2-C-methyl-D-erythritol 4-phosphate + NADP(+) = 1-deoxy-D-xylulose 5-phosphate + NADPH + H(+). Its pathway is isoprenoid biosynthesis; isopentenyl diphosphate biosynthesis via DXP pathway; isopentenyl diphosphate from 1-deoxy-D-xylulose 5-phosphate: step 1/6. Catalyzes the NADPH-dependent rearrangement and reduction of 1-deoxy-D-xylulose-5-phosphate (DXP) to 2-C-methyl-D-erythritol 4-phosphate (MEP). This chain is 1-deoxy-D-xylulose 5-phosphate reductoisomerase, found in Parasynechococcus marenigrum (strain WH8102).